A 316-amino-acid chain; its full sequence is Ribosomal protein L11 methyltransferase (316 aa).

S-adenosyl-L-methionine is bound by residues Thr-157, Gly-178, Asp-200, and Asn-243.

Belongs to the methyltransferase superfamily. PrmA family.

The protein resides in the cytoplasm. The catalysed reaction is L-lysyl-[protein] + 3 S-adenosyl-L-methionine = N(6),N(6),N(6)-trimethyl-L-lysyl-[protein] + 3 S-adenosyl-L-homocysteine + 3 H(+). Functionally, methylates ribosomal protein L11. The protein is Ribosomal protein L11 methyltransferase of Streptococcus pneumoniae (strain ATCC 700669 / Spain 23F-1).